A 311-amino-acid chain; its full sequence is Pyrimidine-specific ribonucleoside hydrolase RihA (311 aa).

H240 is an active-site residue.

The protein belongs to the IUNH family. RihA subfamily.

Hydrolyzes cytidine or uridine to ribose and cytosine or uracil, respectively. The sequence is that of Pyrimidine-specific ribonucleoside hydrolase RihA from Salmonella choleraesuis (strain SC-B67).